The following is a 541-amino-acid chain: Chaperonin GroEL (541 aa).

ATP-binding positions include 30–33, K51, 87–91, G415, 479–481, and D495; these read TLGP, DGTTT, and NAA.

Belongs to the chaperonin (HSP60) family. As to quaternary structure, forms a cylinder of 14 subunits composed of two heptameric rings stacked back-to-back. Interacts with the co-chaperonin GroES.

It localises to the cytoplasm. The enzyme catalyses ATP + H2O + a folded polypeptide = ADP + phosphate + an unfolded polypeptide.. Its function is as follows. Together with its co-chaperonin GroES, plays an essential role in assisting protein folding. The GroEL-GroES system forms a nano-cage that allows encapsulation of the non-native substrate proteins and provides a physical environment optimized to promote and accelerate protein folding. The polypeptide is Chaperonin GroEL (Acinetobacter baumannii (strain SDF)).